Here is a 524-residue protein sequence, read N- to C-terminus: Anthranilate synthase component 1 (524 aa).

L-tryptophan is bound by residues S55 and 297–299 (PYM). 332 to 333 (GT) contacts chorismate. A Mg(2+)-binding site is contributed by E359. Residues Y447, R467, 485-487 (GAG), and G487 each bind chorismate. Residue E500 coordinates Mg(2+).

It belongs to the anthranilate synthase component I family. In terms of assembly, heterotetramer consisting of two non-identical subunits: a beta subunit (TrpG) and a large alpha subunit (TrpE). Mg(2+) is required as a cofactor.

It carries out the reaction chorismate + L-glutamine = anthranilate + pyruvate + L-glutamate + H(+). It functions in the pathway amino-acid biosynthesis; L-tryptophan biosynthesis; L-tryptophan from chorismate: step 1/5. Feedback inhibited by tryptophan. Functionally, part of a heterotetrameric complex that catalyzes the two-step biosynthesis of anthranilate, an intermediate in the biosynthesis of L-tryptophan. In the first step, the glutamine-binding beta subunit (TrpG) of anthranilate synthase (AS) provides the glutamine amidotransferase activity which generates ammonia as a substrate that, along with chorismate, is used in the second step, catalyzed by the large alpha subunit of AS (TrpE) to produce anthranilate. In the absence of TrpG, TrpE can synthesize anthranilate directly from chorismate and high concentrations of ammonia. This is Anthranilate synthase component 1 (trpE) from Haloferax volcanii (strain ATCC 29605 / DSM 3757 / JCM 8879 / NBRC 14742 / NCIMB 2012 / VKM B-1768 / DS2) (Halobacterium volcanii).